Consider the following 368-residue polypeptide: 3-dehydroquinate synthase (368 aa).

NAD(+) is bound by residues 71–76 (DGEAFK), 105–109 (GVVGD), 129–130 (TT), Lys142, Lys151, and 169–172 (TLRT). Zn(2+) contacts are provided by Glu184, His247, and His264.

The protein belongs to the sugar phosphate cyclases superfamily. Dehydroquinate synthase family. Co(2+) is required as a cofactor. The cofactor is Zn(2+). Requires NAD(+) as cofactor.

It is found in the cytoplasm. It catalyses the reaction 7-phospho-2-dehydro-3-deoxy-D-arabino-heptonate = 3-dehydroquinate + phosphate. It functions in the pathway metabolic intermediate biosynthesis; chorismate biosynthesis; chorismate from D-erythrose 4-phosphate and phosphoenolpyruvate: step 2/7. Catalyzes the conversion of 3-deoxy-D-arabino-heptulosonate 7-phosphate (DAHP) to dehydroquinate (DHQ). In Cupriavidus pinatubonensis (strain JMP 134 / LMG 1197) (Cupriavidus necator (strain JMP 134)), this protein is 3-dehydroquinate synthase.